The sequence spans 512 residues: UDP-N-acetylmuramate--L-alanine ligase (512 aa).

An ATP-binding site is contributed by 132-138 (GAHGKTT).

The protein belongs to the MurCDEF family.

Its subcellular location is the cytoplasm. The catalysed reaction is UDP-N-acetyl-alpha-D-muramate + L-alanine + ATP = UDP-N-acetyl-alpha-D-muramoyl-L-alanine + ADP + phosphate + H(+). The protein operates within cell wall biogenesis; peptidoglycan biosynthesis. Its function is as follows. Cell wall formation. This chain is UDP-N-acetylmuramate--L-alanine ligase, found in Bifidobacterium longum (strain DJO10A).